A 158-amino-acid polypeptide reads, in one-letter code: MKDESVLNVLMYLFKNHMQENCTLDLGEKKLLVQLEELGFHRTVIDQALSWLNNLSYSGREPMQLPQKNSFRVFSDYECDLLDTECRRFLITLEQQAILNPHTRELVINQALELSCEGIDVSLLKWVTLMVLFNQSSEKEALASMELLVLDDTVGGIH.

This sequence belongs to the Smg family.

This Coxiella burnetii (strain RSA 331 / Henzerling II) protein is Protein Smg homolog.